We begin with the raw amino-acid sequence, 156 residues long: Transcription elongation factor GreA (156 aa).

Residues 1 to 32 are a coiled coil; the sequence is MKKVRLTREGYEKLKKELEDLKRKFMYEISER.

Belongs to the GreA/GreB family.

Its function is as follows. Necessary for efficient RNA polymerase transcription elongation past template-encoded arresting sites. The arresting sites in DNA have the property of trapping a certain fraction of elongating RNA polymerases that pass through, resulting in locked ternary complexes. Cleavage of the nascent transcript by cleavage factors such as GreA or GreB allows the resumption of elongation from the new 3'terminus. GreA releases sequences of 2 to 3 nucleotides. This Thermotoga sp. (strain RQ2) protein is Transcription elongation factor GreA.